Here is a 419-residue protein sequence, read N- to C-terminus: BTB/POZ domain-containing protein KCTD20 (419 aa).

One can recognise a BTB domain in the interval 117-191 (EKVTLLVDGT…YKTGIINCPD (75 aa)).

Interacts with AKT1; AKT2 and AKT3. Associates with PP2CA. Part of a complex containing MARK4.

Its subcellular location is the cytoplasm. Functionally, promotes the phosphorylation of AKT family members. The sequence is that of BTB/POZ domain-containing protein KCTD20 (KCTD20) from Homo sapiens (Human).